Consider the following 255-residue polypeptide: High-affinity branched-chain amino acid transport ATP-binding protein LivG (255 aa).

Residues 6–254 form the ABC transporter domain; sequence LSVNGLMMRF…PDVIRAYLGE (249 aa). 38–45 contacts ATP; sequence GPNGAGKT.

The protein belongs to the ABC transporter superfamily.

Functionally, component of the leucine-specific transport system. This Escherichia coli O157:H7 protein is High-affinity branched-chain amino acid transport ATP-binding protein LivG (livG).